We begin with the raw amino-acid sequence, 430 residues long: UDP-N-acetylmuramoylalanine--D-glutamate ligase (430 aa).

Residue 109–115 (GTDGKST) coordinates ATP.

The protein belongs to the MurCDEF family.

The protein localises to the cytoplasm. The enzyme catalyses UDP-N-acetyl-alpha-D-muramoyl-L-alanine + D-glutamate + ATP = UDP-N-acetyl-alpha-D-muramoyl-L-alanyl-D-glutamate + ADP + phosphate + H(+). Its pathway is cell wall biogenesis; peptidoglycan biosynthesis. Its function is as follows. Cell wall formation. Catalyzes the addition of glutamate to the nucleotide precursor UDP-N-acetylmuramoyl-L-alanine (UMA). This chain is UDP-N-acetylmuramoylalanine--D-glutamate ligase, found in Thermotoga sp. (strain RQ2).